The chain runs to 103 residues: Small ribosomal subunit protein uS10 (103 aa).

The protein belongs to the universal ribosomal protein uS10 family. Part of the 30S ribosomal subunit.

Functionally, involved in the binding of tRNA to the ribosomes. This is Small ribosomal subunit protein uS10 from Nitratiruptor sp. (strain SB155-2).